The sequence spans 167 residues: Large ribosomal subunit protein uL10 (167 aa).

The protein belongs to the universal ribosomal protein uL10 family. As to quaternary structure, part of the ribosomal stalk of the 50S ribosomal subunit. The N-terminus interacts with L11 and the large rRNA to form the base of the stalk. The C-terminus forms an elongated spine to which L12 dimers bind in a sequential fashion forming a multimeric L10(L12)X complex.

In terms of biological role, forms part of the ribosomal stalk, playing a central role in the interaction of the ribosome with GTP-bound translation factors. The protein is Large ribosomal subunit protein uL10 of Paraburkholderia phytofirmans (strain DSM 17436 / LMG 22146 / PsJN) (Burkholderia phytofirmans).